The primary structure comprises 536 residues: Sensory rhodopsin I transducer (536 aa).

Over 2–14 (TIAWARRRYGVKL) the chain is Cytoplasmic. Residues 15 to 29 (GLGYIATAGLLVGVG) traverse the membrane as a helical segment. At 30–39 (VTTNDVPSTI) the chain is on the extracellular side. A helical transmembrane segment spans residues 40 to 55 (VAGIAGLLTLGSINAA). Residues 55-107 (AETVASIKEIAAQTERVANGNLEQEVTSTRTDEFGSLADSIEQMRQSLRGRLN) enclose the HAMP 1 domain. The Cytoplasmic portion of the chain corresponds to 56–536 (ETVASIKEIA…MRAGADGGGA (481 aa)). The segment at 116–145 (LEETQAEAETAREEAEQAKQEAQAAEREAR) is disordered. Residues 124–145 (ETAREEAEQAKQEAQAAEREAR) are compositionally biased toward basic and acidic residues. Residues 149 to 202 (ATYQDTAKRYGETMEAAATGDLTQRVDVDTDHEAMETVGTAFNQMMDDLQATVR) form the HAMP 2 domain. In terms of domain architecture, Methyl-accepting transducer spans 221–459 (TSADIEASAG…STATSVERVA (239 aa)). The residue at position 266 (E266) is a Glutamate methyl ester (Glu). The disordered stretch occupies residues 278–307 (SEDVATASDAARDSSKSALDEMSSIETEVD). Over residues 287–296 (AARDSSKSAL) the composition is skewed to basic and acidic residues. E473 is modified (glutamate methyl ester (Glu)). A disordered region spans residues 512–536 (TEDSETAGGSVEQPVMRAGADGGGA).

The protein belongs to the methyl-accepting chemotaxis (MCP) protein family. Post-translationally, methylated by CheR.

It localises to the cell membrane. Its function is as follows. Transduces signals from the phototaxis receptor sensory rhodopsin I (SR-I) to the flagellar motor. Responds to light changes through the variation of the level of methylation. In Halobacterium salinarum (strain ATCC 29341 / DSM 671 / R1), this protein is Sensory rhodopsin I transducer (htr1).